The primary structure comprises 159 residues: RxLR effector protein 24 (159 aa).

The N-terminal stretch at 1–18 (MRFLVWVFFVGLVTFVSG) is a signal peptide. Residues 58 to 82 (RFLRSNANQDLTTANDDSDVKEEER) carry the RxLR-dEER motif. An RABA-binding domain region spans residues 109 to 159 (EKAFQHMMKQGETPTSLAKRLEIGGAAELRYEKVYEKYTAWWINYHTVAGT).

This sequence belongs to the RxLR effector family. Interacts with potato RABA GTPases including RABA1a, RABA2a and RABA4a.

It is found in the secreted. The protein localises to the host cell membrane. It localises to the host endomembrane system. Effector protein that contributes to pathogen virulence. Targets members of the RABA GTPases subfamily to inhibit vesicular secretion, leading to an accumulation of secretory proteins in the endoplasmic reticulum. In Phytophthora infestans (strain T30-4) (Potato late blight agent), this protein is RxLR effector protein 24.